A 537-amino-acid polypeptide reads, in one-letter code: Prolyl 4-hydroxylase subunit alpha-2 (537 aa).

The N-terminal stretch at 1-23 (MKLQVLVLVLLMSWFGVLSWVQA) is a signal peptide. Asn117 is a glycosylation site (N-linked (GlcNAc...) asparagine). Residues 209-242 (SLVLDYLSYAVFQLGDLHRAVELTRRLLSLDPSH) form a TPR repeat. The N-linked (GlcNAc...) asparagine glycan is linked to Asn266. The Fe2OG dioxygenase domain maps to 414–522 (TAELLQVANY…KWVSNKWFHE (109 aa)). Positions 432 and 434 each coordinate Fe cation. The residue at position 482 (Lys482) is an N6-succinyllysine. Residue His503 coordinates Fe cation. Residue Lys513 participates in 2-oxoglutarate binding.

This sequence belongs to the P4HA family. Heterotetramer of two alpha-2 chains and two beta chains (P4HB) (the beta chain is the multi-functional PDI), where P4HB plays the role of a structural subunit; this tetramer catalyzes the formation of 4-hydroxyproline in collagen. Fe(2+) is required as a cofactor. The cofactor is L-ascorbate. In terms of tissue distribution, expressed at least in brain, heart and lung.

Its subcellular location is the endoplasmic reticulum lumen. It carries out the reaction L-prolyl-[collagen] + 2-oxoglutarate + O2 = trans-4-hydroxy-L-prolyl-[collagen] + succinate + CO2. Inhibited by poly(L-proline) only at very high concentrations. Catalyzes the post-translational formation of 4-hydroxyproline in -Xaa-Pro-Gly- sequences in collagens and other proteins. The chain is Prolyl 4-hydroxylase subunit alpha-2 (P4ha2) from Mus musculus (Mouse).